Reading from the N-terminus, the 416-residue chain is Serine hydroxymethyltransferase (416 aa).

Residues L121 and 125–127 (GHL) contribute to the (6S)-5,6,7,8-tetrahydrofolate site. K229 carries the N6-(pyridoxal phosphate)lysine modification.

This sequence belongs to the SHMT family. Homodimer. Pyridoxal 5'-phosphate is required as a cofactor.

It localises to the cytoplasm. It carries out the reaction (6R)-5,10-methylene-5,6,7,8-tetrahydrofolate + glycine + H2O = (6S)-5,6,7,8-tetrahydrofolate + L-serine. Its pathway is one-carbon metabolism; tetrahydrofolate interconversion. It functions in the pathway amino-acid biosynthesis; glycine biosynthesis; glycine from L-serine: step 1/1. Functionally, catalyzes the reversible interconversion of serine and glycine with tetrahydrofolate (THF) serving as the one-carbon carrier. This reaction serves as the major source of one-carbon groups required for the biosynthesis of purines, thymidylate, methionine, and other important biomolecules. Also exhibits THF-independent aldolase activity toward beta-hydroxyamino acids, producing glycine and aldehydes, via a retro-aldol mechanism. This Neisseria meningitidis serogroup B (strain ATCC BAA-335 / MC58) protein is Serine hydroxymethyltransferase.